A 103-amino-acid chain; its full sequence is Colicin-V (103 aa).

A propeptide spanning residues 1-15 (MRTLTLNELDSVSGG) is cleaved from the precursor. A disulfide bond links cysteine 91 and cysteine 102.

Its subcellular location is the secreted. Its function is as follows. Colicin V kills sensitive cells by disrupting the membrane potential. Colicins are polypeptide toxins produced by, and active against E.coli and closely related bacteria. This Escherichia coli protein is Colicin-V (cvaC).